The chain runs to 372 residues: Cytoplasmic tRNA 2-thiolation protein 1 (372 aa).

The segment at 335–372 is disordered; that stretch reads GKKEDGGCGSGGGGCGCAGAADETENEETRKRLKDLQF. Gly residues predominate over residues 341 to 351; that stretch reads GCGSGGGGCGC. Positions 361-372 are enriched in basic and acidic residues; it reads EETRKRLKDLQF.

This sequence belongs to the TtcA family. CTU1/NCS6/ATPBD3 subfamily.

Its subcellular location is the cytoplasm. It functions in the pathway tRNA modification; 5-methoxycarbonylmethyl-2-thiouridine-tRNA biosynthesis. Functionally, plays a central role in 2-thiolation of mcm(5)S(2)U at tRNA wobble positions of tRNA(Lys), tRNA(Glu) and tRNA(Gln). Directly binds tRNAs and probably acts by catalyzing adenylation of tRNAs, an intermediate required for 2-thiolation. It is unclear whether it acts as a sulfurtransferase that transfers sulfur from thiocarboxylated URM1 onto the uridine of tRNAs at wobble position. This Caenorhabditis briggsae protein is Cytoplasmic tRNA 2-thiolation protein 1.